A 775-amino-acid polypeptide reads, in one-letter code: MRASLLLSVLRPAGPVAVGISLGFTLSLLSVTWVEEPCGPGPPQPGDSELPPRGNTNAARRPNSVQPGAEREKPGAGEGAGENWEPRVLPYHPAQPGQAAKKAVRTRYISTELGIRQRLLVAVLTSQTTLPTLGVAVNRTLGHRLERVVFLTGARGRRAPPGMAVVTLGEERPIGHLHLALRHLLEQHGDDFDWFFLVPDTTYTEAHGLARLTGHLSLASAAHLYLGRPQDFIGGEPTPGRYCHGGFGVLLSRMLLQQLRPHLEGCRNDIVSARPDEWLGRCILDATGVGCTGDHEGVHYSHLELSPGEPVQEGDPHFRSALTAHPVRDPVHMYQLHKAFARAELERTYQEIQELQWEIQNTSHLAVDGDQAAAWPVGIPAPSRPASRFEVLRWDYFTEQHAFSCADGSPRCPLRGADRADVADVLGTALEELNRRYHPALRLQKQQLVNGYRRFDPARGMEYTLDLQLEALTPQGGRRPLTRRVQLLRPLSRVEILPVPYVTEASRLTVLLPLAAAERDLAPGFLEAFATAALEPGDAAAALTLLLLYEPRQAQRVAHADVFAPVKAHVAELERRFPGARVPWLSVQTAAPSPLRLMDLLSKKHPLDTLFLLAGPDTVLTPDFLNRCRMHAISGWQAFFPMHFQAFHPAVAPPQGPGPPELGRDTGRFDRQAASEACFYNSDYVAARGRLAAASEQEEELLESLDVYELFLHFSSLHVLRAVEPALLQRYRAQTCSARLSEDLYHRCLQSVLEGLGSRTQLAMLLFEQEQGNST.

Residues 1–15 (MRASLLLSVLRPAGP) are Cytoplasmic-facing. A helical; Signal-anchor for type II membrane protein transmembrane segment spans residues 16 to 34 (VAVGISLGFTLSLLSVTWV). Over 35 to 775 (EEPCGPGPPQ…LFEQEQGNST (741 aa)) the chain is Lumenal. A disordered region spans residues 37-100 (PCGPGPPQPG…YHPAQPGQAA (64 aa)). A compositionally biased stretch (polar residues) spans 54-66 (GNTNAARRPNSVQ). Asn-138 and Asn-361 each carry an N-linked (GlcNAc...) asparagine glycan. An a divalent metal cation-binding site is contributed by Asp-617.

The protein belongs to the chondroitin N-acetylgalactosaminyltransferase family. As to quaternary structure, interacts with PRKN. Mn(2+) serves as cofactor. The cofactor is Co(2+). In terms of tissue distribution, ubiquitous. Highly expressed in pancreas, ovary, brain, heart, skeletal muscle, colon, kidney, liver, stomach, spleen and placenta. As to expression, expressed in brain, spleen, ovary, testis, lung and peripheral mononuclear cells. Also ubiquitous.

Its subcellular location is the golgi apparatus. The protein resides in the golgi stack membrane. It is found in the cytoplasm. The protein localises to the cytosol. It localises to the mitochondrion. Its subcellular location is the mitochondrion matrix. The enzyme catalyses 3-O-(beta-D-GlcA-(1-&gt;3)-beta-D-GalNAc-(1-&gt;4)-beta-D-GlcA-(1-&gt;3)-beta-D-Gal-(1-&gt;3)-beta-D-Gal-(1-&gt;4)-beta-D-Xyl)-L-seryl-[protein] + UDP-N-acetyl-alpha-D-galactosamine = 3-O-(beta-D-GalNAc-(1-&gt;4)-beta-D-GlcA-(1-&gt;3)-beta-D-GalNAc-(1-&gt;4)-beta-D-GlcA-(1-&gt;3)-beta-D-Gal-(1-&gt;3)-beta-D-Gal-(1-&gt;4)-beta-D-Xyl)-L-seryl-[protein] + UDP + H(+). The catalysed reaction is 3-O-{beta-D-GlcA-(1-&gt;3)-[beta-D-GalNAc-(1-&gt;4)-beta-D-GlcA-(1-&gt;3)](n)-beta-D-GalNAc-(1-&gt;4)-beta-D-GlcA-(1-&gt;3)-beta-D-Gal-(1-&gt;3)-beta-D-Gal-(1-&gt;4)-beta-D-Xyl}-L-seryl-[protein] + UDP-N-acetyl-alpha-D-galactosamine = 3-O-{[beta-D-GalNAc-(1-&gt;4)-beta-D-GlcA-(1-&gt;3)](n+1)-beta-D-GalNAc-(1-&gt;4)-beta-D-GlcA-(1-&gt;3)-beta-D-Gal-(1-&gt;3)-beta-D-Gal-(1-&gt;4)-beta-D-Xyl}-L-seryl-[protein] + UDP + H(+). It carries out the reaction 3-O-(beta-D-GalNAc-(1-&gt;4)-beta-D-GlcA-(1-&gt;3)-beta-D-Gal-(1-&gt;3)-beta-D-Gal-(1-&gt;4)-beta-D-Xyl)-L-seryl-[protein] + UDP-alpha-D-glucuronate = 3-O-(beta-D-GlcA-(1-&gt;3)-beta-D-GalNAc-(1-&gt;4)-beta-D-GlcA-(1-&gt;3)-beta-D-Gal-(1-&gt;3)-beta-D-Gal-(1-&gt;4)-beta-D-Xyl)-L-seryl-[protein] + UDP + H(+). It catalyses the reaction 3-O-{[beta-D-GalNAc-(1-&gt;4)-beta-D-GlcA-(1-&gt;3)](n)-beta-D-GalNAc-(1-&gt;4)-beta-D-GlcA-(1-&gt;3)-beta-D-Gal-(1-&gt;3)-beta-D-Gal-(1-&gt;4)-beta-D-Xyl}-L-seryl-[protein] + UDP-alpha-D-glucuronate = 3-O-{beta-D-GlcA-(1-&gt;3)-[beta-D-GalNAc-(1-&gt;4)-beta-D-GlcA-(1-&gt;3)](n)-beta-D-GalNAc-(1-&gt;4)-beta-D-GlcA-(1-&gt;3)-beta-D-Gal-(1-&gt;3)-beta-D-Gal-(1-&gt;4)-beta-D-Xyl}-L-seryl-[protein] + UDP + H(+). Has both beta-1,3-glucuronic acid and beta-1,4-N-acetylgalactosamine transferase activity. Transfers glucuronic acid (GlcUA) from UDP-GlcUA and N-acetylgalactosamine (GalNAc) from UDP-GalNAc to the non-reducing end of the elongating chondroitin polymer. Seems to act as a specific activating factor for CHSY1 in chondroitin polymerization. Functionally, may facilitate PRKN transport into the mitochondria. In collaboration with PRKN, may enhance cell viability and protect cells from oxidative stress. This is Chondroitin sulfate synthase 2 from Homo sapiens (Human).